A 359-amino-acid chain; its full sequence is Type-1 angiotensin II receptor (359 aa).

Residues 1–25 (MILNSSTEDGIKRIQDDCPKAGRHN) lie on the Extracellular side of the membrane. N4 is a glycosylation site (N-linked (GlcNAc...) asparagine). The angiotensin II site is built by Q15 and D17. Intrachain disulfides connect C18–C274 and C101–C180. Residues 26-55 (YIFVMIPTLYSIIFVVGIFGNSLVVIVIYF) traverse the membrane as a helical segment. Residues 56-61 (YMKLKT) are Cytoplasmic-facing. The chain crosses the membrane as a helical span at residues 62–89 (VASVFLLNLALADLCFLLTLPLWAVYTA). The Extracellular segment spans residues 90–98 (MEYRWPFGN). Residues 99 to 125 (YLCKIASASVSFNLYASVFLLTCLSID) traverse the membrane as a helical segment. Topologically, residues 126-141 (RYLAIVHPMKSRLRRT) are cytoplasmic. Residues 142–165 (MLVAKVTCIIIWLLAGLASLPAII) traverse the membrane as a helical segment. The Extracellular portion of the chain corresponds to 166 to 190 (HRNVFFIENTNITVCAFHYESQNST). Angiotensin II is bound at residue R167. N-linked (GlcNAc...) asparagine glycosylation is present at N176. Angiotensin II-binding residues include F182, H183, and Y184. N188 carries N-linked (GlcNAc...) asparagine glycosylation. Residues 191–216 (LPIGLGLTKNILGFLFPFLIILTSYT) form a helical membrane-spanning segment. K199 provides a ligand contact to angiotensin II. Residues 217–239 (LIWKALKKAYEIQKNKPRNDDIF) lie on the Cytoplasmic side of the membrane. Residues 240–268 (KIIMAIVLFFFFSWIPHQIFTFLDVLIQL) traverse the membrane as a helical segment. Topologically, residues 269–278 (GIIRDCRIAD) are extracellular. A helical transmembrane segment spans residues 279 to 304 (IVDTAMPITICIAYFNNCLNPLFYGF). Residues 305–359 (LGKKFKKYFLQLLKYIPPKAKSHSNLSTKMSTLSYRPSDNVSSSTKKPAPCFEVE) lie on the Cytoplasmic side of the membrane. Residues 335 to 350 (STLSYRPSDNVSSSTK) are compositionally biased toward polar residues. Positions 335-359 (STLSYRPSDNVSSSTKKPAPCFEVE) are disordered. A lipid anchor (S-palmitoyl cysteine) is attached at C355.

It belongs to the G-protein coupled receptor 1 family. In terms of assembly, interacts with MAS1. Interacts with ARRB1. Interacts with FLNA (via filamin repeat 21); increases PKA-mediated phosphorylation of FLNA. In terms of processing, C-terminal Ser or Thr residues may be phosphorylated.

It is found in the cell membrane. Its function is as follows. Receptor for angiotensin II, a vasoconstricting peptide, which acts as a key regulator of blood pressure and sodium retention by the kidney. The activated receptor in turn couples to G-alpha proteins G(q) (GNAQ, GNA11, GNA14 or GNA15) and thus activates phospholipase C and increases the cytosolic Ca(2+) concentrations, which in turn triggers cellular responses such as stimulation of protein kinase C. This chain is Type-1 angiotensin II receptor (AGTR1), found in Pan troglodytes (Chimpanzee).